We begin with the raw amino-acid sequence, 127 residues long: MAKGGNKLMKLKSVLKKLNSFNTKPNQPPAQTNHSRSSAVSAFPSEDLQTVYVGRTRRTYHVSSDVVSHPLFQQLAAVDGGCGSEDGSISVSCEVVLFEHLLWMLENADADESRPESVYELVEFYAC.

Residues 20–40 (SFNTKPNQPPAQTNHSRSSAV) form a disordered region.

This sequence belongs to the ARG7 family. As to expression, expressed in cotyledons, hypocotyls and roots of young seedlings. Expressed in emerging lateral root, leaves, flowers, stamens and filaments.

The protein resides in the nucleus. Its subcellular location is the cytoplasm. It localises to the cell membrane. May be involved in the regulation of ethylene receptor signaling. Promotes cell expansion and plant growth. Involved in the regulation of cell elongation. The protein is Auxin-responsive protein SAUR76 of Arabidopsis thaliana (Mouse-ear cress).